The chain runs to 212 residues: Phosphatidylserine decarboxylase proenzyme (212 aa).

Catalysis depends on Ser-182, which acts as the Schiff-base intermediate with substrate; via pyruvic acid. Ser-182 is subject to Pyruvic acid (Ser); by autocatalysis.

This sequence belongs to the phosphatidylserine decarboxylase family. PSD-A subfamily. In terms of assembly, heterodimer of a large membrane-associated beta subunit and a small pyruvoyl-containing alpha subunit. Pyruvate is required as a cofactor. Post-translationally, is synthesized initially as an inactive proenzyme. Formation of the active enzyme involves a self-maturation process in which the active site pyruvoyl group is generated from an internal serine residue via an autocatalytic post-translational modification. Two non-identical subunits are generated from the proenzyme in this reaction, and the pyruvate is formed at the N-terminus of the alpha chain, which is derived from the carboxyl end of the proenzyme. The post-translation cleavage follows an unusual pathway, termed non-hydrolytic serinolysis, in which the side chain hydroxyl group of the serine supplies its oxygen atom to form the C-terminus of the beta chain, while the remainder of the serine residue undergoes an oxidative deamination to produce ammonia and the pyruvoyl prosthetic group on the alpha chain.

The protein localises to the cell membrane. It carries out the reaction a 1,2-diacyl-sn-glycero-3-phospho-L-serine + H(+) = a 1,2-diacyl-sn-glycero-3-phosphoethanolamine + CO2. Its pathway is phospholipid metabolism; phosphatidylethanolamine biosynthesis; phosphatidylethanolamine from CDP-diacylglycerol: step 2/2. In terms of biological role, catalyzes the formation of phosphatidylethanolamine (PtdEtn) from phosphatidylserine (PtdSer). The sequence is that of Phosphatidylserine decarboxylase proenzyme from Chlorobium chlorochromatii (strain CaD3).